Reading from the N-terminus, the 469-residue chain is Glutamate--tRNA ligase 2 (469 aa).

Positions proline 10 to serine 20 match the 'HIGH' region motif. Positions lysine 239–arginine 243 match the 'KMSKS' region motif. ATP is bound at residue lysine 242.

This sequence belongs to the class-I aminoacyl-tRNA synthetase family. Glutamate--tRNA ligase type 1 subfamily. As to quaternary structure, monomer.

Its subcellular location is the cytoplasm. It carries out the reaction tRNA(Glu) + L-glutamate + ATP = L-glutamyl-tRNA(Glu) + AMP + diphosphate. Catalyzes the attachment of glutamate to tRNA(Glu) in a two-step reaction: glutamate is first activated by ATP to form Glu-AMP and then transferred to the acceptor end of tRNA(Glu). This Rickettsia typhi (strain ATCC VR-144 / Wilmington) protein is Glutamate--tRNA ligase 2.